A 135-amino-acid polypeptide reads, in one-letter code: Transcription antitermination protein NusB (135 aa).

The protein belongs to the NusB family.

Involved in transcription antitermination. Required for transcription of ribosomal RNA (rRNA) genes. Binds specifically to the boxA antiterminator sequence of the ribosomal RNA (rrn) operons. This Nocardioides sp. (strain ATCC BAA-499 / JS614) protein is Transcription antitermination protein NusB.